A 565-amino-acid chain; its full sequence is Bifunctional dihydrofolate reductase-thymidylate synthase 2 (565 aa).

The DHFR domain occupies 65 to 242; it reads TYQVVVAATK…LRFSFTTHVR (178 aa). Valine 69 is a binding site for substrate. NADP(+) contacts are provided by residues alanine 71 and 77-83; that span reads GIGKDGK. Aspartate 91 lines the substrate pocket. NADP(+)-binding positions include 115–117 and 136–139; these read RKT and LSRS. Isoleucine 178 contacts substrate. 179–186 contacts NADP(+); it reads GGGDILRE. Threonine 199 contributes to the substrate binding site. The interval 245–280 is hinge; that stretch reads SSSAGEASDESDGSKVLQVDWKKFSSVLPKMIFDRH. The thymidylate synthase stretch occupies residues 281 to 565; sequence EEYLYLNLVK…HKKIDMKMAV (285 aa). A dUMP-binding site is contributed by arginine 302. Cysteine 447 is a catalytic residue. DUMP is bound by residues histidine 448, 466–470, asparagine 478, and 508–510; these read QRSAD and HVY.

It in the N-terminal section; belongs to the dihydrofolate reductase family. This sequence in the C-terminal section; belongs to the thymidylate synthase family. As to quaternary structure, heterodimer or homodimer.

It catalyses the reaction (6S)-5,6,7,8-tetrahydrofolate + NADP(+) = 7,8-dihydrofolate + NADPH + H(+). It carries out the reaction dUMP + (6R)-5,10-methylene-5,6,7,8-tetrahydrofolate = 7,8-dihydrofolate + dTMP. It functions in the pathway cofactor biosynthesis; tetrahydrofolate biosynthesis; 5,6,7,8-tetrahydrofolate from 7,8-dihydrofolate: step 1/1. Bifunctional enzyme. Involved in de novo dTMP biosynthesis. Key enzyme in folate metabolism. Can play two different roles depending on the source of dihydrofolate: de novo synthesis of tetrahydrofolate or recycling of the dihydrofolate released as one of the end products of the TS catalyzed reaction. Catalyzes an essential reaction for de novo glycine and purine synthesis, DNA precursor synthesis, and for the conversion of dUMP to dTMP. The protein is Bifunctional dihydrofolate reductase-thymidylate synthase 2 (THY-2) of Arabidopsis thaliana (Mouse-ear cress).